Consider the following 296-residue polypeptide: Ribosomal protein L11 methyltransferase (296 aa).

Residues T151, G172, D194, and N233 each contribute to the S-adenosyl-L-methionine site.

This sequence belongs to the methyltransferase superfamily. PrmA family.

The protein resides in the cytoplasm. It catalyses the reaction L-lysyl-[protein] + 3 S-adenosyl-L-methionine = N(6),N(6),N(6)-trimethyl-L-lysyl-[protein] + 3 S-adenosyl-L-homocysteine + 3 H(+). Its function is as follows. Methylates ribosomal protein L11. This is Ribosomal protein L11 methyltransferase from Thiobacillus denitrificans (strain ATCC 25259 / T1).